Consider the following 85-residue polypeptide: UPF0386 protein Atu1321 (85 aa).

It belongs to the UPF0386 family.

The polypeptide is UPF0386 protein Atu1321 (Agrobacterium fabrum (strain C58 / ATCC 33970) (Agrobacterium tumefaciens (strain C58))).